Reading from the N-terminus, the 154-residue chain is SsrA-binding protein (154 aa).

Belongs to the SmpB family.

The protein resides in the cytoplasm. Required for rescue of stalled ribosomes mediated by trans-translation. Binds to transfer-messenger RNA (tmRNA), required for stable association of tmRNA with ribosomes. tmRNA and SmpB together mimic tRNA shape, replacing the anticodon stem-loop with SmpB. tmRNA is encoded by the ssrA gene; the 2 termini fold to resemble tRNA(Ala) and it encodes a 'tag peptide', a short internal open reading frame. During trans-translation Ala-aminoacylated tmRNA acts like a tRNA, entering the A-site of stalled ribosomes, displacing the stalled mRNA. The ribosome then switches to translate the ORF on the tmRNA; the nascent peptide is terminated with the 'tag peptide' encoded by the tmRNA and targeted for degradation. The ribosome is freed to recommence translation, which seems to be the essential function of trans-translation. The chain is SsrA-binding protein from Treponema denticola (strain ATCC 35405 / DSM 14222 / CIP 103919 / JCM 8153 / KCTC 15104).